The sequence spans 264 residues: Spermidine/putrescine transport system permease protein PotC (264 aa).

The Cytoplasmic segment spans residues 1 to 7 (MIGRLLR). A helical membrane pass occupies residues 8 to 27 (GGFMTAIYAYLYIPIIILIV). At 28–65 (NSFNSSRFGINWQGFTTKWYSLLMNNDSLLQAAQHSLT) the chain is on the periplasmic side. Residues 60-248 (AQHSLTMAVF…VLSLVMVIAS (189 aa)) form the ABC transmembrane type-1 domain. Residues 66–85 (MAVFSATFATLIGSLTAVAL) form a helical membrane-spanning segment. Topologically, residues 86-100 (YRYRFRGKPFVSGML) are cytoplasmic. The chain crosses the membrane as a helical span at residues 101-120 (FVVMMSPDIVMAISLLVLFM). At 121–128 (LLGIQLGF) the chain is on the periplasmic side. A helical transmembrane segment spans residues 129 to 148 (WSLLFSHITFCLPFVVVTVY). The Cytoplasmic segment spans residues 149-176 (SRLKGFDVRMLEAAKDLGASEFTILRKI). Residues 177-196 (ILPLAMPAVAAGWVLSFTLS) form a helical membrane-spanning segment. The Periplasmic segment spans residues 197 to 231 (MDDVVVSSFVTGPSYEILPLKIYSMVKVGVSPEVN). A helical transmembrane segment spans residues 232-251 (ALATILLVLSLVMVIASQLI). The Cytoplasmic portion of the chain corresponds to 252-264 (ARDKTKGNTGDVK).

Belongs to the binding-protein-dependent transport system permease family. CysTW subfamily.

It is found in the cell inner membrane. In terms of biological role, required for the activity of the bacterial periplasmic transport system of putrescine and spermidine. In Escherichia coli O157:H7, this protein is Spermidine/putrescine transport system permease protein PotC (potC).